The sequence spans 310 residues: Transcriptional activator BRRF1 (310 aa).

The protein belongs to the lymphocryptovirus BBRF1 family.

In terms of biological role, enhances the ability of BRLF1 to induce lytic infection by cooperating with it to transcriptionally activate the BZLF1 promoter. This is Transcriptional activator BRRF1 from Epstein-Barr virus (strain AG876) (HHV-4).